Here is a 136-residue protein sequence, read N- to C-terminus: Protein scalloped (136 aa).

It localises to the nucleus. Probable transcription factor that function in the regulation of cell-specific gene expression during drosophila development, particularly in the differentiation of the nervous system. The polypeptide is Protein scalloped (SD) (Junonia coenia (Peacock butterfly)).